The primary structure comprises 200 residues: Pyrrolidone-carboxylate peptidase (200 aa).

Residues E78, C141, and H165 contribute to the active site.

Belongs to the peptidase C15 family. In terms of assembly, homotetramer.

It is found in the cytoplasm. It catalyses the reaction Release of an N-terminal pyroglutamyl group from a polypeptide, the second amino acid generally not being Pro.. Its function is as follows. Removes 5-oxoproline from various penultimate amino acid residues except L-proline. The polypeptide is Pyrrolidone-carboxylate peptidase (Lactobacillus acidophilus (strain ATCC 700396 / NCK56 / N2 / NCFM)).